Consider the following 272-residue polypeptide: Auxin-responsive protein IAA5 (272 aa).

The interval 1-92 (MSPPLEPHDY…DSSPRHGASS (92 aa)) is disordered. Composition is skewed to low complexity over residues 14–33 (SAAAASPTPSSSSCSSSPNP) and 40–50 (PRLTLRLGLPG). The EAR-like (transcriptional repression) motif lies at 44 to 48 (LRLGL). Residues 152–256 (PLYVKVSMDG…RKLKIMRGSD (105 aa)) form the PB1 domain.

This sequence belongs to the Aux/IAA family. As to quaternary structure, homodimers and heterodimers. As to expression, highly expressed in roots and flowers. Expressed in shoots.

It localises to the nucleus. Its function is as follows. Aux/IAA proteins are short-lived transcriptional factors that function as repressors of early auxin response genes at low auxin concentrations. This is Auxin-responsive protein IAA5 (IAA5) from Oryza sativa subsp. indica (Rice).